A 138-amino-acid polypeptide reads, in one-letter code: MRTLWIVAMCLIGVEGNLFQFARMIDAKQEAFSFFKYISYGCYCGWGGQGTPKDASDRCCFVHDCCYARVKGCNPKLVEYSYSYRTGKIVCETYNRCKRAVCECDRVAAICLGQNVNTYNKGYMFLSSYYCRQKSEQC.

The signal sequence occupies residues Met1–Gly16. Intrachain disulfides connect Cys42–Cys131, Cys44–Cys60, Cys59–Cys111, Cys65–Cys138, Cys66–Cys104, Cys73–Cys97, and Cys91–Cys102. Positions 43, 45, and 47 each coordinate Ca(2+). The active site involves His63. Residue Asp64 coordinates Ca(2+). The active site involves Asp105.

The cofactor is Ca(2+). In terms of tissue distribution, expressed by the venom gland.

Its subcellular location is the secreted. The enzyme catalyses a 1,2-diacyl-sn-glycero-3-phosphocholine + H2O = a 1-acyl-sn-glycero-3-phosphocholine + a fatty acid + H(+). Exhibits high hydrolytic activities and shows strong preference for the anionic micelles (dPPC with deoxycholate) to the zwitterionic micelles (dPPC with Triton X-100). PLA2 catalyzes the calcium-dependent hydrolysis of the 2-acyl groups in 3-sn-phosphoglycerides. The protein is Basic phospholipase A2 Drk-b1 of Daboia russelii (Russel's viper).